The chain runs to 425 residues: uncharacterized protein (425 aa).

The 52-residue stretch at 2–53 (SFNLLDLPIVPRQKALKYLEPIDLFELSLCSKRMAQSVRDLKIEASAHFITL) folds into the F-box domain.

This is an uncharacterized protein from Caenorhabditis elegans.